Consider the following 346-residue polypeptide: Biotin synthase (346 aa).

Positions 38–256 constitute a Radical SAM core domain; that stretch reads RQVQVSTLLS…IAVARIMMPT (219 aa). [4Fe-4S] cluster contacts are provided by Cys53, Cys57, and Cys60. Residues Cys97, Cys128, Cys188, and Arg260 each coordinate [2Fe-2S] cluster.

This sequence belongs to the radical SAM superfamily. Biotin synthase family. As to quaternary structure, homodimer. Requires [4Fe-4S] cluster as cofactor. The cofactor is [2Fe-2S] cluster.

It carries out the reaction (4R,5S)-dethiobiotin + (sulfur carrier)-SH + 2 reduced [2Fe-2S]-[ferredoxin] + 2 S-adenosyl-L-methionine = (sulfur carrier)-H + biotin + 2 5'-deoxyadenosine + 2 L-methionine + 2 oxidized [2Fe-2S]-[ferredoxin]. It participates in cofactor biosynthesis; biotin biosynthesis; biotin from 7,8-diaminononanoate: step 2/2. Functionally, catalyzes the conversion of dethiobiotin (DTB) to biotin by the insertion of a sulfur atom into dethiobiotin via a radical-based mechanism. The protein is Biotin synthase of Escherichia coli O157:H7.